We begin with the raw amino-acid sequence, 124 residues long: Large ribosomal subunit protein bL12 (124 aa).

This sequence belongs to the bacterial ribosomal protein bL12 family. In terms of assembly, homodimer. Part of the ribosomal stalk of the 50S ribosomal subunit. Forms a multimeric L10(L12)X complex, where L10 forms an elongated spine to which 2 to 4 L12 dimers bind in a sequential fashion. Binds GTP-bound translation factors.

In terms of biological role, forms part of the ribosomal stalk which helps the ribosome interact with GTP-bound translation factors. Is thus essential for accurate translation. The sequence is that of Large ribosomal subunit protein bL12 from Ralstonia pickettii (strain 12J).